We begin with the raw amino-acid sequence, 187 residues long: Ras-like protein rasD (187 aa).

10 to 17 contacts GTP; that stretch reads GGGGVGKS. The Effector region signature appears at 32 to 40; sequence YDPTIEDSY. GTP is bound by residues 57 to 61 and 116 to 119; these read DTAGQ and NKAD. A Cysteine methyl ester modification is found at Cys184. Cys184 carries S-geranylgeranyl cysteine lipidation. A propeptide spans 185-187 (removed in mature form); sequence LIL.

The protein belongs to the small GTPase superfamily. Ras family.

Its subcellular location is the cell membrane. The catalysed reaction is GTP + H2O = GDP + phosphate + H(+). With respect to regulation, alternates between an inactive form bound to GDP and an active form bound to GTP. Activated by a guanine nucleotide-exchange factor (GEF) and inactivated by a GTPase-activating protein (GAP). Ras proteins bind GDP/GTP and possess intrinsic GTPase activity. The polypeptide is Ras-like protein rasD (rasD) (Dictyostelium discoideum (Social amoeba)).